A 244-amino-acid chain; its full sequence is MKTYFISDLHLAPSRQDITDCFLTFMKNEALEADALYVLGDLFEFWIGDDDTSEFANSIRQTFIDLVNTGVPCYFTQGNRDFLVGKKFAKQTGVQLLDEVSTIDIYGQKAVVLHGDTLCTEDIKYLAFREKVHQPWLQWVFNRIPFFIKKKIVSKVQSDIKDDKQTKSLDIMDVTQQEVENVMKQHNVDLMIHGHTHRPNIHSFSANNCTKTRIVLGDWYTQGSVLVFTPQSFELQNREFSNRF.

Residues Asp-8, His-10, Asp-41, Asn-79, and His-114 each contribute to the Mn(2+) site. 79-80 (NR) contacts substrate. Substrate contacts are provided by Asp-122, Lys-164, Lys-167, and His-195. Residues His-195 and His-197 each contribute to the Mn(2+) site.

Belongs to the LpxH family. It depends on Mn(2+) as a cofactor.

The protein resides in the cell inner membrane. It catalyses the reaction UDP-2-N,3-O-bis[(3R)-3-hydroxytetradecanoyl]-alpha-D-glucosamine + H2O = 2-N,3-O-bis[(3R)-3-hydroxytetradecanoyl]-alpha-D-glucosaminyl 1-phosphate + UMP + 2 H(+). The protein operates within glycolipid biosynthesis; lipid IV(A) biosynthesis; lipid IV(A) from (3R)-3-hydroxytetradecanoyl-[acyl-carrier-protein] and UDP-N-acetyl-alpha-D-glucosamine: step 4/6. Its function is as follows. Hydrolyzes the pyrophosphate bond of UDP-2,3-diacylglucosamine to yield 2,3-diacylglucosamine 1-phosphate (lipid X) and UMP by catalyzing the attack of water at the alpha-P atom. Involved in the biosynthesis of lipid A, a phosphorylated glycolipid that anchors the lipopolysaccharide to the outer membrane of the cell. This is UDP-2,3-diacylglucosamine hydrolase from Vibrio atlanticus (strain LGP32) (Vibrio splendidus (strain Mel32)).